We begin with the raw amino-acid sequence, 358 residues long: Peptide chain release factor 1 (358 aa).

Glutamine 236 bears the N5-methylglutamine mark.

This sequence belongs to the prokaryotic/mitochondrial release factor family. In terms of processing, methylated by PrmC. Methylation increases the termination efficiency of RF1.

Its subcellular location is the cytoplasm. Peptide chain release factor 1 directs the termination of translation in response to the peptide chain termination codons UAG and UAA. This is Peptide chain release factor 1 from Corynebacterium efficiens (strain DSM 44549 / YS-314 / AJ 12310 / JCM 11189 / NBRC 100395).